Here is a 1036-residue protein sequence, read N- to C-terminus: Cysteine-rich motor neuron 1 protein (1036 aa).

Positions 1 to 34 are cleaved as a signal peptide; the sequence is MYLVAGDRGLAGCGHLLVSLLGLLLLLARSGTRA. An IGFBP N-terminal domain is found at 35 to 112; it reads LVCLPCDESK…EYEAGVCEDE (78 aa). Over 35–939 the chain is Extracellular; that stretch reads LVCLPCDESK…HPSEDSSLDS (905 aa). 4 cysteine pairs are disulfide-bonded: cysteine 37-cysteine 60, cysteine 40-cysteine 62, cysteine 45-cysteine 63, and cysteine 51-cysteine 66. Asparagine 71 carries an N-linked (GlcNAc...) asparagine glycan. 2 disulfides stabilise this stretch: cysteine 74–cysteine 90 and cysteine 84–cysteine 109. The N-linked (GlcNAc...) asparagine glycan is linked to asparagine 113. A Cell attachment site motif is present at residues 314–316; it reads RGD. Asparagine 330 is a glycosylation site (N-linked (GlcNAc...) asparagine). VWFC domains are found at residues 334 to 391 and 401 to 457; these read PACV…PVCE and AGCY…PVCE. Antistasin-like domains lie at 469 to 498, 505 to 532, 539 to 564, and 567 to 592; these read CGEL…TCQC, CSER…ICEC, CRPI…ICRC, and CPEL…ICKC. Residue asparagine 474 is glycosylated (N-linked (GlcNAc...) asparagine). VWFC domains follow at residues 606–663 and 677–735; these read GTCL…PSCA and SICH…PQCT. The N-linked (GlcNAc...) asparagine glycan is linked to asparagine 746. 2 VWFC domains span residues 751-809 and 817-874; these read NYCK…PYCI and VVCH…PMCP. The helical transmembrane segment at 940–960 threads the bilayer; the sequence is IASVVVPIIICLSIIIAFLFI. Residues 961–1036 are Cytoplasmic-facing; the sequence is NQKKQWIPLL…LQADNFYQTV (76 aa). Residue threonine 1035 is modified to Phosphothreonine.

In terms of assembly, interacts with BMP4 and BMP7. In terms of processing, N-glycosylated. As to expression, expressed in pancreas, kidney, skeletal muscle, lung, placenta, brain, heart, spleen, liver and small intestine. Expressed in blood vessels (at protein level).

The protein localises to the secreted. Its subcellular location is the cell membrane. In terms of biological role, may play a role in CNS development by interacting with growth factors implicated in motor neuron differentiation and survival. May play a role in capillary formation and maintenance during angiogenesis. Modulates BMP activity by affecting its processing and delivery to the cell surface. The polypeptide is Cysteine-rich motor neuron 1 protein (CRIM1) (Homo sapiens (Human)).